Reading from the N-terminus, the 291-residue chain is GTPase Era (291 aa).

In terms of domain architecture, Era-type G spans 2 to 167 (KSGFVSIIGR…LDEIVKCLNE (166 aa)). The tract at residues 10–17 (GRTNAGKS) is G1. 10–17 (GRTNAGKS) is a GTP binding site. The G2 stretch occupies residues 36 to 40 (NATRR). The interval 57–60 (DTPG) is G3. GTP is bound by residues 57–61 (DTPGL) and 116–119 (NKVD). The G4 stretch occupies residues 116–119 (NKVD). The tract at residues 146–148 (YSS) is G5. Positions 186–274 (YRDFILESIY…LLKLFVTVKK (89 aa)) constitute a KH type-2 domain.

It belongs to the TRAFAC class TrmE-Era-EngA-EngB-Septin-like GTPase superfamily. Era GTPase family. In terms of assembly, monomer.

Its subcellular location is the cytoplasm. The protein resides in the cell inner membrane. Functionally, an essential GTPase that binds both GDP and GTP, with rapid nucleotide exchange. Plays a role in 16S rRNA processing and 30S ribosomal subunit biogenesis and possibly also in cell cycle regulation and energy metabolism. The sequence is that of GTPase Era from Campylobacter jejuni subsp. doylei (strain ATCC BAA-1458 / RM4099 / 269.97).